A 158-amino-acid chain; its full sequence is Transcription elongation factor GreA (158 aa).

The stretch at 5 to 75 forms a coiled coil; that stretch reads EKLPMLAEGY…DLEDRVSRAQ (71 aa).

This sequence belongs to the GreA/GreB family.

Its function is as follows. Necessary for efficient RNA polymerase transcription elongation past template-encoded arresting sites. The arresting sites in DNA have the property of trapping a certain fraction of elongating RNA polymerases that pass through, resulting in locked ternary complexes. Cleavage of the nascent transcript by cleavage factors such as GreA or GreB allows the resumption of elongation from the new 3'terminus. GreA releases sequences of 2 to 3 nucleotides. The chain is Transcription elongation factor GreA from Novosphingobium aromaticivorans (strain ATCC 700278 / DSM 12444 / CCUG 56034 / CIP 105152 / NBRC 16084 / F199).